We begin with the raw amino-acid sequence, 242 residues long: MKVMECQTYEELSQIAARITADTIKEKPDAVLGLATGGTPEGTYRQLIRLHQTENLSFQNITTVNLDEYAGLSSDDPNSYHFYMNDRFFQHIDSKPSRHFIPNGNADDLEAECRRYEQLVDSLGDTDIQLLGIGRNGHIGFNEPGTSFKSRTHVVTLNEQTRQANARYFPSIDSVPKKALTMGIQTILSSKRILLLISGKSKAEAVRKLLEGNISEDFPASALHLHSDVTVLIDREAASLRP.

Threonine 36, glycine 38, threonine 39, and aspartate 67 together coordinate beta-D-fructose 6-phosphate. Aspartate 67 serves as the catalytic Proton acceptor; for enolization step. The active-site For ring-opening step is asparagine 136. Beta-D-fructose 6-phosphate is bound by residues histidine 138 and glycine 140. Histidine 138 (proton acceptor; for ring-opening step) is an active-site residue. Residue glutamate 143 is the For ring-opening step of the active site. Arginine 167 and lysine 202 together coordinate beta-D-fructose 6-phosphate.

The protein belongs to the glucosamine/galactosamine-6-phosphate isomerase family. NagB subfamily. As to quaternary structure, monomer.

It carries out the reaction alpha-D-glucosamine 6-phosphate + H2O = beta-D-fructose 6-phosphate + NH4(+). It participates in amino-sugar metabolism; N-acetylneuraminate degradation; D-fructose 6-phosphate from N-acetylneuraminate: step 5/5. With respect to regulation, activity decreases at high substrate concentrations, which may reflect substrate inhibition. Unlike the E.coli enzyme, is not regulated by an allosteric mechanism. In terms of biological role, catalyzes the reversible isomerization-deamination of glucosamine 6-phosphate (GlcN6P) to form fructose 6-phosphate (Fru6P) and ammonium ion. This chain is Glucosamine-6-phosphate deaminase 1 (nagB), found in Bacillus subtilis (strain 168).